The sequence spans 1574 residues: Myosin-2 (1574 aa).

The residue at position 2 (Ser-2) is an N-acetylserine. Residues 4 to 57 (EVGTRCWYPHKELGWIGAEVIKNEFNDGKYHLELQLEDDEIVSVDTKDLNNDKD) form the Myosin N-terminal SH3-like domain. The region spanning 70–781 (EATEDLTSLS…MLAYLEKLRS (712 aa)) is the Myosin motor domain. 164-171 (GESGAGKT) is an ATP binding site. Residues 443-523 (FIGVLDIYGF…LGILSLLDEE (81 aa)) form an actin-binding region. IQ domains lie at 784 to 806 (MHNS…QYLQ), 807 to 831 (ISQA…NDEM), 832 to 855 (KVNC…VFSV), 856 to 879 (LRTI…KQEH), 880 to 902 (EYNA…RFLR), and 903 to 932 (TKKD…DAKS). A coiled-coil region spans residues 933–1088 (VNHLKEVSYK…RLQTAMSLGT (156 aa)). Residues 1087–1574 (GTVTTSVLPQ…VAQQVVQDGH (488 aa)) form a non alpha-helical, tail domain region. Thr-1097 bears the Phosphothreonine mark. At Ser-1121 the chain carries Phosphoserine. Residues 1226-1501 (AQVLTTIQKV…LRYVADIVKK (276 aa)) enclose the Dilute domain.

Belongs to the TRAFAC class myosin-kinesin ATPase superfamily. Myosin family. Homodimer. Interacts with calmodulin (CMD1) and the myosin light chain MLC1 through its IQ repeats. Binds to the membrane receptors SEC4 and VAC17 to transport secretory vesicles and the vacuole, respectively. Binds to KAR9, which transports BIM1-coated cytoplasmic microtubules that are attached to the spindle pole body into the emerging bud, thereby correctly orienting the mitotic spindle. Interacts with YPT11 and MMR1 to accelerate mitochondrial distribution to the bud. Interacts with SHE4 and localizes it to the bud tip. Interacts with RHO3 and SMY1, putative regulators of MYO2 function. Interacts with SRO7.

The protein resides in the bud neck. The protein localises to the bud tip. Its function is as follows. Myosin heavy chain that is required for the cell cycle-regulated transport of various organelles and proteins for their segregation. Functions by binding with its tail domain to receptor proteins on organelles and exerting force with its N-terminal motor domain against actin filaments, thereby transporting its cargo along polarized actin cables. Essential for the delivery of secretory vesicles to sites of active growth during bud emergence and cytokinesis. Required for segregation and inheritance of peroxisomes, late Golgi compartments, mitochondria and the vacuole to the daughter cell during cell division. Also required for correct alignment of the spindle during mitosis. This is Myosin-2 (MYO2) from Saccharomyces cerevisiae (strain ATCC 204508 / S288c) (Baker's yeast).